The following is a 994-amino-acid chain: Regulator of telomere elongation helicase 1 homolog (994 aa).

A Helicase ATP-binding domain is found at 7-316 (AGIPVHFPFE…DDLMLLKEML (310 aa)). 42-49 (SPTGTGKT) serves as a coordination point for ATP. [4Fe-4S] cluster contacts are provided by Cys-146, Cys-164, Cys-173, and Cys-209. The short motif at 252-255 (DEAH) is the DEAH box element. The interval 861–887 (SSGLVKIHKRERSSPPGSSQSSSQTAK) is disordered. Low complexity predominate over residues 874–884 (SPPGSSQSSSQ).

It belongs to the helicase family. RAD3/XPD subfamily.

The protein localises to the nucleus. The enzyme catalyses ATP + H2O = ADP + phosphate + H(+). In terms of biological role, a probable ATP-dependent DNA helicase implicated in DNA repair and the maintenance of genomic stability. Acts as an anti-recombinase to counteract toxic recombination and limit crossover during meiosis. Regulates meiotic recombination and crossover homeostasis by physically dissociating strand invasion events and thereby promotes noncrossover repair by meiotic synthesis dependent strand annealing (SDSA) as well as disassembly of D loop recombination intermediates. This is Regulator of telomere elongation helicase 1 homolog from Drosophila ananassae (Fruit fly).